The sequence spans 275 residues: Expansin-B6 (275 aa).

Residues 1 to 25 (MAARMGSKVAAILAILSVLVVHGSC) form the signal peptide. N-linked (GlcNAc...) asparagine glycosylation is present at N33. The 107-residue stretch at 64 to 170 (GGACGFKNVN…RRVPCNYPGL (107 aa)) folds into the Expansin-like EG45 domain. 3 disulfide bridges follow: C67-C95, C98-C165, and C103-C109. An Expansin-like CBD domain is found at 183 to 270 (VYFAVLVEYE…NWSPNSNYRS (88 aa)).

It belongs to the expansin family. Expansin B subfamily. In terms of tissue distribution, expressed in internodes.

It localises to the secreted. It is found in the cell wall. The protein localises to the membrane. Its function is as follows. May cause loosening and extension of plant cell walls by disrupting non-covalent bonding between cellulose microfibrils and matrix glucans. No enzymatic activity has been found. May be required for rapid internodal elongation in deepwater rice during submergence. The protein is Expansin-B6 (EXPB6) of Oryza sativa subsp. japonica (Rice).